The sequence spans 378 residues: Cytochrome b (378 aa).

4 helical membrane passes run 33 to 53, 77 to 98, 113 to 133, and 178 to 198; these read FGSL…FLAM, WLIR…YLHI, WNTG…GYVL, and FFAF…LHFL. 2 residues coordinate heme b: histidine 83 and histidine 97. Heme b-binding residues include histidine 182 and histidine 196. Residue histidine 201 participates in a ubiquinone binding. 4 consecutive transmembrane segments (helical) span residues 226-246, 288-308, 320-340, and 347-367; these read YKDL…AVFS, LGGV…PFLH, WSQL…WIGG, and LTTV…FLMP.

This sequence belongs to the cytochrome b family. In terms of assembly, the cytochrome bc1 complex contains 3 respiratory subunits (MT-CYB, CYC1 and UQCRFS1), 2 core proteins (UQCRC1 and UQCRC2) and probably 6 low-molecular weight proteins. It depends on heme b as a cofactor.

The protein resides in the mitochondrion inner membrane. Its function is as follows. Component of the ubiquinol-cytochrome c reductase complex (complex III or cytochrome b-c1 complex) that is part of the mitochondrial respiratory chain. The b-c1 complex mediates electron transfer from ubiquinol to cytochrome c. Contributes to the generation of a proton gradient across the mitochondrial membrane that is then used for ATP synthesis. In Indostomus paradoxus (Armoured stickleback), this protein is Cytochrome b (mt-cyb).